The primary structure comprises 382 residues: Succinyl-diaminopimelate desuccinylase (382 aa).

Residue H72 coordinates Zn(2+). D74 is a catalytic residue. Position 105 (D105) interacts with Zn(2+). The active-site Proton acceptor is the E139. Residues E140, E168, and H354 each coordinate Zn(2+).

Belongs to the peptidase M20A family. DapE subfamily. Homodimer. It depends on Zn(2+) as a cofactor. Requires Co(2+) as cofactor.

It carries out the reaction N-succinyl-(2S,6S)-2,6-diaminopimelate + H2O = (2S,6S)-2,6-diaminopimelate + succinate. It functions in the pathway amino-acid biosynthesis; L-lysine biosynthesis via DAP pathway; LL-2,6-diaminopimelate from (S)-tetrahydrodipicolinate (succinylase route): step 3/3. Its function is as follows. Catalyzes the hydrolysis of N-succinyl-L,L-diaminopimelic acid (SDAP), forming succinate and LL-2,6-diaminopimelate (DAP), an intermediate involved in the bacterial biosynthesis of lysine and meso-diaminopimelic acid, an essential component of bacterial cell walls. This Shewanella amazonensis (strain ATCC BAA-1098 / SB2B) protein is Succinyl-diaminopimelate desuccinylase.